The sequence spans 873 residues: Kinase suppressor of Ras 1 (873 aa).

Disordered regions lie at residues 1–24 (MDRA…GAAA), 174–230 (EHKM…PGLS), and 251–281 (LHSF…PSRK). The mediates association with membranes stretch occupies residues 1–170 (MDRAALRAAA…ALTCLRKVTG (170 aa)). The span at 206-216 (ASTQGPRSISV) shows a compositional bias: polar residues. Residues Thr-256 and Thr-260 each carry the phosphothreonine modification. Ser-297 carries the post-translational modification Phosphoserine; by MARK3. Ser-320 is modified (phosphoserine). A Phorbol-ester/DAG-type zinc finger spans residues 333 to 377 (THRFSTKSWLSQVCNVCQKSMIFGVKCKHCRLKCHNKCTKEAPAC). Residue His-334 coordinates Zn(2+). Position 337 is a phosphoserine (Ser-337). The Zn(2+) site is built by Cys-346, Cys-349, Cys-359, Cys-362, His-367, Cys-370, and Cys-377. Ser-392 bears the Phosphoserine; by MARK3 mark. Phosphothreonine is present on Thr-411. Disordered regions lie at residues 416 to 473 (LTKK…RFSF) and 506 to 544 (HEAE…PISR). Residues 429 to 458 (SSSNPSSTTSSTPSSPAPFLTSSNPSSATT) are compositionally biased toward low complexity. The span at 506 to 519 (HEAEAEEPEAGKSE) shows a compositional bias: basic and acidic residues. Ser-518 carries the phosphoserine modification. Over residues 520-530 (AEDDEEDEVDD) the composition is skewed to acidic residues. Positions 563-833 (VELGEPIGQG…MDMLERLPKL (271 aa)) constitute a Protein kinase domain. An ATP-binding site is contributed by 569 to 577 (IGQGRWGRV). Asp-683 functions as the Proton acceptor in the catalytic mechanism. ATP is bound by residues Lys-685 and Asp-700. Ser-838 is modified (phosphoserine).

Belongs to the protein kinase superfamily. TKL Ser/Thr protein kinase family. As to quaternary structure, homodimer. Heterodimerizes (via N-terminus) with BRAF (via N-terminus) in a MAP2K1/MEK1 or MAP2K2/MEK2-dependent manner. Interacts with MAP2K1/MEK1 and MAP2K2/MEK2. Binding to MAP2K1/MEK1 releases the intramolecular inhibitory interaction between KSR1 N-terminus and kinase domains which is required for the subsequent RSK1 dimerization with BRAF. Identified in a complex with AKAP13, MAP2K1 and BRAF. Interacts with AKAP13 and BRAF. Interacts with RAF and MAPK/ERK, in a Ras-dependent manner. Interacts with 14-3-3 proteins including YWHAB. Interacts with HSP90AA1/HSP90, YWHAE/14-3-3 and CDC37. The binding of 14-3-3 proteins to phosphorylated KSR1 prevents the membrane localization. Interacts with MARK3/C-TAK1. Interacts with PPP2R1A and PPP2CA. Interacts with VRK2. Phosphorylated on Ser-297 and, to a higher extent, on Ser-392 by MARK3. Dephosphorylated on Ser-392 by PPP2CA. Phosphorylated KSR1 is cytoplasmic and dephosphorylated KSR1 is membrane-associated. Phosphorylated by PKA at Ser-838. Phosphorylation at Ser-838 is required for cAMP-dependent activation of MAPK1 and/or MAPK3. Expressed in brain, spleen and testis. Isoform 1 is highly expressed spleen and weakly in testis, and isoform 2 is highly expressed in brain and weakly in testis.

Its subcellular location is the cytoplasm. It is found in the membrane. It localises to the cell membrane. The protein resides in the cell projection. The protein localises to the ruffle membrane. Its subcellular location is the endoplasmic reticulum membrane. It catalyses the reaction L-seryl-[protein] + ATP = O-phospho-L-seryl-[protein] + ADP + H(+). The enzyme catalyses L-threonyl-[protein] + ATP = O-phospho-L-threonyl-[protein] + ADP + H(+). Functionally, part of a multiprotein signaling complex which promotes phosphorylation of Raf family members and activation of downstream MAP kinases. Independently of its kinase activity, acts as MAP2K1/MEK1 and MAP2K2/MEK2-dependent allosteric activator of BRAF; upon binding to MAP2K1/MEK1 or MAP2K2/MEK2, dimerizes with BRAF and promotes BRAF-mediated phosphorylation of MAP2K1/MEK1 and/or MAP2K2/MEK2. Promotes activation of MAPK1 and/or MAPK3, both in response to EGF and to cAMP. Its kinase activity is unsure. Some protein kinase activity has been detected in vitro, however the physiological relevance of this activity is unknown. This is Kinase suppressor of Ras 1 (Ksr1) from Mus musculus (Mouse).